The following is a 121-amino-acid chain: Small ribosomal subunit protein uS11 (121 aa).

It belongs to the universal ribosomal protein uS11 family. As to quaternary structure, part of the 30S ribosomal subunit. Interacts with proteins S7 and S18. Binds to IF-3.

Its function is as follows. Located on the platform of the 30S subunit, it bridges several disparate RNA helices of the 16S rRNA. Forms part of the Shine-Dalgarno cleft in the 70S ribosome. In Ureaplasma parvum serovar 3 (strain ATCC 27815 / 27 / NCTC 11736), this protein is Small ribosomal subunit protein uS11.